We begin with the raw amino-acid sequence, 159 residues long: Neuroglobin (159 aa).

One can recognise a Globin domain in the interval K3–A151. Heme b-binding residues include H66 and H98.

It belongs to the globin family. In terms of assembly, monomer. Homodimers and homotetramers. Mainly monomeric but also detected as part of homodimers and homotetramers. Detected in brain, eye and gill, but not in muscle and blood (at protein level). Particularly high expression in the periventral zone of tectum opticum, with significant expression detected in white matter, preglomerular nucleus, posterior tubular nucleus, torus longitudinalis, hypothalamus, pituitary gland, posterior tuberculum, hypothalamus, synencephalon and formatio reticularis. Detected also in brain regions of the visual system, predominantly in parts of tectum opticum and torus semicircularis, area dorsalis telencephali and medulla oblongata. Strong expression observed in sensory epithelium of peripheral olfactory organ, and outer and inner nuclear layers and ganglion cell layer of retina.

It localises to the cytoplasm. The protein localises to the cytosol. The protein resides in the mitochondrion matrix. The enzyme catalyses Fe(III)-heme b-[protein] + nitric oxide + H2O = Fe(II)-heme b-[protein] + nitrite + 2 H(+). Its function is as follows. Monomeric globin with a bis-histidyl six-coordinate heme-iron atom through which it can bind dioxygen, carbon monoxide and nitric oxide. Could help transport oxygen and increase its availability to the metabolically active neuronal tissues, though its low quantity in tissues as well as its high affinity for dioxygen, which may limit its oxygen-releasing ability, argue against it. The ferrous/deoxygenated form exhibits a nitrite reductase activity and it could produce nitric oxide which in turn inhibits cellular respiration in response to hypoxia. In its ferrous/deoxygenated state, it may also exhibit GDI (Guanine nucleotide Dissociation Inhibitor) activity toward heterotrimeric G-alpha proteins, thereby regulating signal transduction to facilitate neuroprotective responses in the wake of hypoxia and associated oxidative stress. The sequence is that of Neuroglobin (ngb) from Danio rerio (Zebrafish).